The chain runs to 452 residues: Translation initiation factor eIF2B subunit gamma (452 aa).

The residue at position 1 (M1) is an N-acetylmethionine. Position 260 is a phosphoserine (S260).

Belongs to the eIF-2B gamma/epsilon subunits family. In terms of assembly, component of the translation initiation factor 2B (eIF2B) complex which is a heterodecamer of two sets of five different subunits: alpha, beta, gamma, delta and epsilon. Subunits alpha, beta and delta comprise a regulatory subcomplex and subunits epsilon and gamma comprise a catalytic subcomplex. Within the complex, the hexameric regulatory complex resides at the center, with the two heterodimeric catalytic subcomplexes bound on opposite sides.

Its subcellular location is the cytoplasm. The protein localises to the cytosol. Its activity is regulated as follows. Activated by the chemical integrated stress response (ISR) inhibitor ISRIB which stimulates guanine nucleotide exchange factor activity for both phosphorylated and unphosphorylated eIF2. In terms of biological role, acts as a component of the translation initiation factor 2B (eIF2B) complex, which catalyzes the exchange of GDP for GTP on the eukaryotic initiation factor 2 (eIF2) complex gamma subunit. Its guanine nucleotide exchange factor activity is repressed when bound to eIF2 complex phosphorylated on the alpha subunit, thereby limiting the amount of methionyl-initiator methionine tRNA available to the ribosome and consequently global translation is repressed. This chain is Translation initiation factor eIF2B subunit gamma (EIF2B3), found in Homo sapiens (Human).